A 267-amino-acid chain; its full sequence is Acetylglutamate kinase (267 aa).

Residues 53–54 (GG), Arg75, and Asn167 each bind substrate.

It belongs to the acetylglutamate kinase family. ArgB subfamily.

It is found in the cytoplasm. It carries out the reaction N-acetyl-L-glutamate + ATP = N-acetyl-L-glutamyl 5-phosphate + ADP. The protein operates within amino-acid biosynthesis; L-arginine biosynthesis; N(2)-acetyl-L-ornithine from L-glutamate: step 2/4. Functionally, catalyzes the ATP-dependent phosphorylation of N-acetyl-L-glutamate. This chain is Acetylglutamate kinase, found in Shewanella pealeana (strain ATCC 700345 / ANG-SQ1).